The chain runs to 274 residues: MATPDLRNTPSVSPEAGQAPVQLRNVVRQFGRQRVIDGLNLDIAPGEFVALLGASGSGKTTLLRTLAGLDEIDSGELRVPVARAAVFQEPRLMPWKSAWKNVVLGLRINDAKARAEAALTEVGLAHRLNAFPATLSGGEAQRVALARGLVREPKLLLLDEPFAALDALTRIRMHQLIIDLWRKHTPAVLLVTHDVDEAILLADRVIVLADGRIADGIRVDLPRQRDSGQAGFQLIRSRLLGLLGVKVHAAVDSAPQAPEQDVTLSALRRFANAR.

The 215-residue stretch at valine 21–isoleucine 235 folds into the ABC transporter domain. An ATP-binding site is contributed by glycine 53–threonine 60.

The protein belongs to the ABC transporter superfamily. Aliphatic sulfonates importer (TC 3.A.1.17.2) family. The complex is composed of two ATP-binding proteins (SsuB), two transmembrane proteins (SsuC) and a solute-binding protein (SsuA).

The protein resides in the cell inner membrane. The catalysed reaction is ATP + H2O + aliphatic sulfonate-[sulfonate-binding protein]Side 1 = ADP + phosphate + aliphatic sulfonateSide 2 + [sulfonate-binding protein]Side 1.. Functionally, part of the ABC transporter complex SsuABC involved in aliphatic sulfonates import. Responsible for energy coupling to the transport system. This chain is Aliphatic sulfonates import ATP-binding protein SsuB 2, found in Pseudomonas syringae pv. syringae (strain B728a).